Consider the following 111-residue polypeptide: Secreted transmembrane peptide 5 (111 aa).

The signal sequence occupies residues 1–46; that stretch reads MRLSVFYIFITRLAMTKNATKNEMGSKSPNIVALVLPLLLILYTLS. The SCOOP motif motif lies at 66–79; the sequence is IVWTPHSNSCGGSP. Residues 72–74 carry the SxS motif essential for MIK2 binding motif; the sequence is SNS. A disordered region spans residues 89–111; that stretch reads TTGRPCRRSRPPGTNIPVSDQSP.

The protein belongs to the serine rich endogenous peptide (SCOOP) phytocytokine family. In terms of assembly, interacts with MIK2 (via extracellular leucine-rich repeat domain); this interaction triggers the formation of complex between MIK2 and the BAK1/SERK3 and SERK4 coreceptors, and subsequent BAK1 activation by phosphorylation. Mostly expressed in leaves, and, to a lower extent, in roots, stems, siliques, seeds and flowers.

The protein localises to the cell membrane. It is found in the secreted. Its subcellular location is the extracellular space. The protein resides in the apoplast. Its function is as follows. Brassicaceae-specific phytocytokine (plant endogenous peptide released into the apoplast) perceived by MIK2 in a BAK1/SERK3 and SERK4 coreceptors-dependent manner, that modulates various physiological and antimicrobial processes including growth prevention and reactive oxygen species (ROS) response regulation. The protein is Secreted transmembrane peptide 5 of Arabidopsis thaliana (Mouse-ear cress).